Consider the following 239-residue polypeptide: Vesicle-associated protein 1-3 (239 aa).

Met-1 is modified (N-acetylmethionine). Thr-2 bears the N-acetylthreonine; in Vesicle-associated protein 1-3, N-terminally processed mark. Topologically, residues 2-215 (TTGDLVNIHP…RKETSKKQSG (214 aa)) are cytoplasmic. The MSP domain occupies 6–127 (LVNIHPTELK…EDFKLRVVYI (122 aa)). Ser-133 and Ser-164 each carry phosphoserine. Residues 179–214 (SMISKLTEEKTSATQQSQKLRLELEMLRKETSKKQS) adopt a coiled-coil conformation. A helical; Anchor for type IV membrane protein transmembrane segment spans residues 216–236 (GHSLLLMLLVGLLGCVIGYLL).

The protein belongs to the VAMP-associated protein (VAP) (TC 9.B.17) family.

The protein resides in the endoplasmic reticulum membrane. In terms of biological role, may play a role in vesicle trafficking. This Arabidopsis thaliana (Mouse-ear cress) protein is Vesicle-associated protein 1-3 (PVA13).